The primary structure comprises 303 residues: MYYGFDIGGTKIALGVFDNERRLRWEKRVPTPREGYEAFLTAVCDLVAEADQRFDVKGSVGIGIPGMPETEDGTLYAANVPAASGKPLRADLSARLDRDVRLDNDANCFALSEAWDDEFTQYPLVMGLILGTGVGGGLVLNGKPITGCSYITGEFGHMRLPVDALTLMGFDFPLRRCGCGQLGCIENYLSGRGFAWLYQHYYHQPLQAPEIIALWEQGDERARAHVERYLDLLAVCLGNILTIVDPDLVVIGGGLSNFTAITTQLADRLPRHLLPVARVPRIERARHGDAGGMRGAAFLHLTD.

ATP is bound by residues 4–11 and 133–140; these read GFDIGGTK and GVGGGLVL. Residues H157, C177, C179, and C184 each contribute to the Zn(2+) site.

It belongs to the ROK (NagC/XylR) family. NagK subfamily.

The catalysed reaction is N-acetyl-D-glucosamine + ATP = N-acetyl-D-glucosamine 6-phosphate + ADP + H(+). It functions in the pathway cell wall biogenesis; peptidoglycan recycling. Its function is as follows. Catalyzes the phosphorylation of N-acetyl-D-glucosamine (GlcNAc) derived from cell-wall degradation, yielding GlcNAc-6-P. The sequence is that of N-acetyl-D-glucosamine kinase from Citrobacter koseri (strain ATCC BAA-895 / CDC 4225-83 / SGSC4696).